The sequence spans 1491 residues: Chromosome partition protein MukB (1491 aa).

34 to 41 contributes to the ATP binding site; it reads GGNGAGKS. Coiled-coil stretches lie at residues 302–418, 488–600, 638–666, 781–806, 836–1109, and 1210–1239; these read LIEQ…QYQQ, EVAR…RFES, ELEK…RLAS, RAAR…AKAS, EQAL…DLRT, and VEAI…ISSD. The flexible hinge stretch occupies residues 667–784; it reads PGGSNDPRLK…AIPLFGRAAR (118 aa). The segment at 1059–1080 is disordered; sequence QRRRDELQERLHTSRSRKSEYE.

It belongs to the SMC family. MukB subfamily. Homodimerization via its hinge domain. Binds to DNA via its C-terminal region. Interacts, and probably forms a ternary complex, with MukE and MukF via its C-terminal region. The complex formation is stimulated by calcium or magnesium. Interacts with tubulin-related protein FtsZ.

It is found in the cytoplasm. The protein localises to the nucleoid. Functionally, plays a central role in chromosome condensation, segregation and cell cycle progression. Functions as a homodimer, which is essential for chromosome partition. Involved in negative DNA supercoiling in vivo, and by this means organize and compact chromosomes. May achieve or facilitate chromosome segregation by condensation DNA from both sides of a centrally located replisome during cell division. The protein is Chromosome partition protein MukB of Vibrio cholerae serotype O1 (strain ATCC 39541 / Classical Ogawa 395 / O395).